A 197-amino-acid chain; its full sequence is Guanylate kinase (197 aa).

A Guanylate kinase-like domain is found at 10 to 187; it reads GSLFIVSAPA…AYQVLRSILI (178 aa). 17 to 24 is an ATP binding site; sequence APAGTGKT.

Belongs to the guanylate kinase family.

The protein localises to the cytoplasm. It carries out the reaction GMP + ATP = GDP + ADP. In terms of biological role, essential for recycling GMP and indirectly, cGMP. The protein is Guanylate kinase of Protochlamydia amoebophila (strain UWE25).